Reading from the N-terminus, the 323-residue chain is Olfactory receptor 4K5 (323 aa).

Residues 1-25 (MDKSNSSVVSEFVLLGLCSSQKLQL) are Extracellular-facing. The N-linked (GlcNAc...) asparagine glycan is linked to Asn-5. The chain crosses the membrane as a helical span at residues 26–49 (FYFCFFSVLYTVIVLGNLLIILTV). The Cytoplasmic segment spans residues 50–57 (TSDTSLHS). The helical transmembrane segment at 58-79 (PMYFLLGNLSFVDICQASFATP) threads the bilayer. The Extracellular segment spans residues 80–100 (KMIADFLSAHETISFSGCIAQ). The cysteines at positions 97 and 189 are disulfide-linked. A helical membrane pass occupies residues 101-120 (IFFIHLFTGGEMVLLVSMAY). The Cytoplasmic portion of the chain corresponds to 121–139 (DRYVAICKPLYYVVIMSRR). The chain crosses the membrane as a helical span at residues 140-158 (TCTVLVMISWAVSLVHTLS). Residues 159–195 (QLSFTVNLPFCGPNVVDSFFCDLPRVTKLACLDSYII) lie on the Extracellular side of the membrane. The chain crosses the membrane as a helical span at residues 196–219 (EILIVVNSGILSLSTFSLLVSSYI). Residues 220–235 (IILVTVWLKSSAAMAK) are Cytoplasmic-facing. The helical transmembrane segment at 236-258 (AFSTLASHIAVVILFFGPCIFIY) threads the bilayer. The Extracellular portion of the chain corresponds to 259 to 269 (VWPFTISPLDK). The chain crosses the membrane as a helical span at residues 270–289 (FLAIFYTVFTPVLNPIIYTL). Topologically, residues 290–323 (RNRDMKAAVRKIVNHYLRPRRISEMSLVVRTSFH) are cytoplasmic.

Belongs to the G-protein coupled receptor 1 family.

The protein resides in the cell membrane. In terms of biological role, odorant receptor. The polypeptide is Olfactory receptor 4K5 (OR4K5) (Homo sapiens (Human)).